Reading from the N-terminus, the 73-residue chain is Small ribosomal subunit protein bS18 (73 aa).

The protein belongs to the bacterial ribosomal protein bS18 family. Part of the 30S ribosomal subunit. Forms a tight heterodimer with protein bS6.

Binds as a heterodimer with protein bS6 to the central domain of the 16S rRNA, where it helps stabilize the platform of the 30S subunit. This is Small ribosomal subunit protein bS18 from Synechococcus sp. (strain WH7803).